Reading from the N-terminus, the 565-residue chain is E3 ubiquitin-protein ligase ipaH7.8 (565 aa).

The interval Met1–Thr22 is disordered. Residues Met1–Met262 are interaction with target proteins. The segment covering Ser9–Thr22 has biased composition (low complexity). LRR repeat units lie at residues Gln58–Ile79, Ser80–Ala97, Phe98–Leu119, Thr120–Asn137, His138–Glu157, Lys158–Leu179, Glu180–Asn199, Arg202–Leu223, and Ser225–Thr248. The linker stretch occupies residues Ser263–Leu270. The E3 ubiquitin-protein ligase catalytic domain stretch occupies residues His271 to Ser565. One can recognise an NEL domain in the interval Pro273 to Ser565. Catalysis depends on Cys357, which acts as the Glycyl thioester intermediate.

This sequence belongs to the LRR-containing bacterial E3 ligase family. Post-translationally, ubiquitinated in the presence of host E1 ubiquitin-activating enzyme, E2 ubiquitin-conjugating enzyme and ubiquitin.

The protein resides in the secreted. It is found in the host cytoplasm. It catalyses the reaction S-ubiquitinyl-[E2 ubiquitin-conjugating enzyme]-L-cysteine + [acceptor protein]-L-lysine = [E2 ubiquitin-conjugating enzyme]-L-cysteine + N(6)-ubiquitinyl-[acceptor protein]-L-lysine.. It functions in the pathway protein modification; protein ubiquitination. Functionally, E3 ubiquitin ligase effector protein that interferes with host's innate immunity. Functions to alter host cell physiology and promote bacterial survival in host tissues. Catalyzes ubiquitination of human gasdermins GSDMB and GSDMD, promoting their degradation by the proteasome, thereby preventing cell death. In contrast, activates host cell pyroptosis in mouse cells: catalyzes ubiquitination of mouse Nlrp1b allele 1 protein, releasing the cleaved C-terminal part of Nlrp1b, which polymerizes and forms the Nlrp1b inflammasome followed by host cell pyroptosis. Does not catalyze ubiquitination of mouse GSDMD. The sequence is that of E3 ubiquitin-protein ligase ipaH7.8 from Shigella flexneri.